A 971-amino-acid chain; its full sequence is Exportin-2 (971 aa).

Residues 29–102 (AEKYLESVEG…KSSIINLMLR (74 aa)) enclose the Importin N-terminal domain.

This sequence belongs to the XPO2/CSE1 family.

Its subcellular location is the cytoplasm. It is found in the nucleus. Functionally, export receptor for importin alpha. Mediates importin-alpha re-export from the nucleus to the cytoplasm after import substrates have been released into the nucleoplasm. This is Exportin-2 (cse1l) from Xenopus laevis (African clawed frog).